Reading from the N-terminus, the 90-residue chain is Protein P18 (90 aa).

3 helical membrane passes run 1 to 21 (MPFG…RDTL), 37 to 57 (GFGY…IKPI), and 60 to 80 (PVNA…RGAI).

The protein localises to the virion membrane. Its function is as follows. Component of the phage injection machinery. Required for DNA injection in the membrane transformation event. Involved in the formation of the membrane tail tube to connect the virus interior with the host cytosol. Essential for viral infectivity. The chain is Protein P18 (XVIII) from Acinetobacter calcoaceticus (Arthrobacter siderocapsulatus).